Consider the following 865-residue polypeptide: Protein translocase subunit SecA (865 aa).

ATP-binding positions include glutamine 93, 111-115, and aspartate 501; that span reads GEGKT. Cysteine 841, cysteine 843, cysteine 852, and cysteine 853 together coordinate Zn(2+).

Belongs to the SecA family. As to quaternary structure, monomer and homodimer. Part of the essential Sec protein translocation apparatus which comprises SecA, SecYEG and auxiliary proteins SecDF-YajC and YidC. The cofactor is Zn(2+).

It localises to the cell inner membrane. Its subcellular location is the cytoplasm. It catalyses the reaction ATP + H2O + cellular proteinSide 1 = ADP + phosphate + cellular proteinSide 2.. In terms of biological role, part of the Sec protein translocase complex. Interacts with the SecYEG preprotein conducting channel. Has a central role in coupling the hydrolysis of ATP to the transfer of proteins into and across the cell membrane, serving as an ATP-driven molecular motor driving the stepwise translocation of polypeptide chains across the membrane. The sequence is that of Protein translocase subunit SecA from Helicobacter pylori (strain Shi470).